Reading from the N-terminus, the 140-residue chain is Profilin (140 aa).

Ser2 is subject to N-acetylserine.

It belongs to the profilin family. As to quaternary structure, occurs in many kinds of cells as a complex with monomeric actin in a 1:1 ratio.

It localises to the cytoplasm. The protein resides in the cytoskeleton. In terms of biological role, binds to actin and affects the structure of the cytoskeleton. At high concentrations, profilin prevents the polymerization of actin, whereas it enhances it at low concentrations. By binding to PIP2, it inhibits the formation of IP3 and DG. This Heliocidaris crassispina (Sea urchin) protein is Profilin.